The following is a 469-amino-acid chain: MWRDKVKEYEDFILEDLKGLLSIESVREDDKASAENPVGPGPRQALDYMYKIAERDGFGTHDVDHIAGRIEAGKGDDVFGILCHVDVVPAGDGWDSDPFNPVVTDDKIIARGTLDDKGPTIAAYYAVKILNEMNVNWKKRIHIIIGTDEESDWKCTERYFQTEEMPELGFAPDAEFPAIHGEKGISTFDVIQNEKADDQDEPEYELRSFVSGQRYNMVPDEAIANVAVKENMTDVIQNFEQYLNEHDVEGESVVDSGVLVLKVQGKAVHGMDPSIGVNAGLYLLNFLATLNLDKTAANFVAFSERYLFESHFGEKMGMKFHTDVMGDVTTNVGIITYDNQDGGKFGINLRYPEGFEFEESLTRFKGEIQSLGFSIELGKNQTPHYVEKDDPFLQSLVQAYRNQTGDDTEPYTIGGGTYARNLDKGVAFGAMFSDSEDLMHQKNEYITKKQLFNATSIYLESLYKLCVEE.

A Zn(2+)-binding site is contributed by H84. The active site involves D86. Residue D115 coordinates Zn(2+). Catalysis depends on E149, which acts as the Proton acceptor. Zn(2+)-binding residues include E150, D173, and H440.

It belongs to the peptidase M20A family. Zn(2+) serves as cofactor.

In Staphylococcus saprophyticus subsp. saprophyticus (strain ATCC 15305 / DSM 20229 / NCIMB 8711 / NCTC 7292 / S-41), this protein is Putative dipeptidase SSP1012.